Here is a 101-residue protein sequence, read N- to C-terminus: Small ribosomal subunit protein uS14 (101 aa).

It belongs to the universal ribosomal protein uS14 family. In terms of assembly, part of the 30S ribosomal subunit. Contacts proteins S3 and S10.

In terms of biological role, binds 16S rRNA, required for the assembly of 30S particles and may also be responsible for determining the conformation of the 16S rRNA at the A site. In Kocuria rhizophila (strain ATCC 9341 / DSM 348 / NBRC 103217 / DC2201), this protein is Small ribosomal subunit protein uS14.